Reading from the N-terminus, the 280-residue chain is Chlorophyll a-b binding protein CP29 (280 aa).

Residues 1–42 (MVFKFPTPPGTQKKAGTTATKPAPKATTKKVATSTGTRSGGV) are disordered. Position 2 is an N-acetylvaline (valine 2). Threonine 7 carries the post-translational modification Phosphothreonine; in State 1 and State 2. Residues 10–37 (GTQKKAGTTATKPAPKATTKKVATSTGT) show a composition bias toward low complexity. A Phosphothreonine; in State 2 modification is found at threonine 17. Phosphothreonine; in State 1 and State 2 is present on threonine 33. A chlorophyll b-binding site is contributed by tyrosine 47. Phenylalanine 73 and serine 79 together coordinate chlorophyll a. A Phosphoserine; in State 2 modification is found at serine 103. The chlorophyll a site is built by glutamate 137 and histidine 140. Helical transmembrane passes span 143-163 (WAML…VSWV) and 176-196 (AGLS…ILVG). The chlorophyll b site is built by serine 183, glutamate 199, and arginine 202. Chlorophyll a is bound by residues glutamate 238, histidine 241, arginine 243, and glutamine 255. A helical membrane pass occupies residues 244–264 (LAMVSFFGYGVQALSTGEGAL).

This sequence belongs to the light-harvesting chlorophyll a/b-binding (LHC) protein family. As to quaternary structure, the LHC complex consists of chlorophyll a-b binding proteins. Binds at least 14 chlorophylls (8 Chl-a and 6 Chl-b) and carotenoids such as lutein and neoxanthin. is required as a cofactor. Post-translationally, reversible phosphorylation plays a role in the State transition process and determines the affinity of LHCII for PSI and PSII.

It is found in the plastid. The protein resides in the chloroplast thylakoid membrane. In terms of biological role, the light-harvesting complex (LHC) functions as a light receptor, it captures and delivers excitation energy to photosystems with which it is closely associated. CP29 facilitates the State 1 to State 2 transition, where State I is induced by excess photosystem I (PSI) light and State 2 is induced by excess photosystem II (PSII) light. The polypeptide is Chlorophyll a-b binding protein CP29 (Chlamydomonas reinhardtii (Chlamydomonas smithii)).